The following is a 699-amino-acid chain: Elongation factor G (699 aa).

Residues 8–288 (EDYRNFGIMA…AVVDYLPSPL (281 aa)) enclose the tr-type G domain. Residues 17 to 24 (AHIDAGKT), 86 to 90 (DTPGH), and 140 to 143 (NKMD) each bind GTP.

The protein belongs to the TRAFAC class translation factor GTPase superfamily. Classic translation factor GTPase family. EF-G/EF-2 subfamily.

The protein localises to the cytoplasm. Its function is as follows. Catalyzes the GTP-dependent ribosomal translocation step during translation elongation. During this step, the ribosome changes from the pre-translocational (PRE) to the post-translocational (POST) state as the newly formed A-site-bound peptidyl-tRNA and P-site-bound deacylated tRNA move to the P and E sites, respectively. Catalyzes the coordinated movement of the two tRNA molecules, the mRNA and conformational changes in the ribosome. The sequence is that of Elongation factor G from Agrobacterium fabrum (strain C58 / ATCC 33970) (Agrobacterium tumefaciens (strain C58)).